Here is a 362-residue protein sequence, read N- to C-terminus: Glutamate 5-kinase (362 aa).

Residue Lys3 participates in ATP binding. Substrate is bound by residues Ser43, Asp128, and Asn140. ATP-binding positions include 160–161 (TD) and 202–208 (TGGMRTK). The 82-residue stretch at 267-348 (AGAILVDAGA…REIENVLGYS (82 aa)) folds into the PUA domain.

The protein belongs to the glutamate 5-kinase family.

Its subcellular location is the cytoplasm. It catalyses the reaction L-glutamate + ATP = L-glutamyl 5-phosphate + ADP. It participates in amino-acid biosynthesis; L-proline biosynthesis; L-glutamate 5-semialdehyde from L-glutamate: step 1/2. Catalyzes the transfer of a phosphate group to glutamate to form L-glutamate 5-phosphate. The polypeptide is Glutamate 5-kinase (Xanthomonas oryzae pv. oryzae (strain KACC10331 / KXO85)).